A 359-amino-acid chain; its full sequence is 4-galactosyl-N-acetylglucosaminide 3-alpha-L-fucosyltransferase FUT6 (359 aa).

Residues 1 to 14 (MDPLGPAKPQWSWR) are Cytoplasmic-facing. The helical; Signal-anchor for type II membrane protein transmembrane segment at 15–34 (CCLTTLLFQLLVAVCFFSYL) threads the bilayer. Residues 35-359 (RVSRDDPTVY…QTRSIAAWFT (325 aa)) are Lumenal-facing. 4 N-linked (GlcNAc...) asparagine glycosylation sites follow: asparagine 46, asparagine 91, asparagine 153, and asparagine 184. A determines site-specific fucosylation region spans residues 73-112 (KPIALPRCSEMVPGTADCNITADRKVYPQADAVIVHHREV).

Belongs to the glycosyltransferase 10 family. Homodimer and monomer. Monomer (secreted form). Post-translationally, N-glycosylated. Proteolytic cleavage releases a secreted glycoform of 43 kDa.

It localises to the golgi apparatus. The protein localises to the golgi stack membrane. Its subcellular location is the secreted. The enzyme catalyses a beta-D-galactosyl-(1-&gt;4)-N-acetyl-beta-D-glucosaminyl derivative + GDP-beta-L-fucose = a beta-D-galactosyl-(1-&gt;4)-[alpha-L-fucosyl-(1-&gt;3)]-N-acetyl-beta-D-glucosaminyl derivative + GDP + H(+). The catalysed reaction is an N-acetyl-alpha-neuraminyl-(2-&gt;3)-beta-D-galactosyl-(1-&gt;4)-N-acetyl-beta-D-glucosaminyl derivative + GDP-beta-L-fucose = an alpha-Neu5Ac-(2-&gt;3)-beta-D-Gal-(1-&gt;4)-[alpha-L-Fuc-(1-&gt;3)]-beta-D-GlcNAc derivative + GDP + H(+). It carries out the reaction an alpha-Neu5Ac-(2-&gt;3)-beta-D-Gal-(1-&gt;4)-beta-D-GlcNAc-(1-&gt;3)-beta-D-Gal-(1-&gt;4)-[alpha-L-Fuc-(1-&gt;3)]-beta-D-GlcNAc derivative + GDP-beta-L-fucose = an alpha-Neu5Ac-(2-&gt;3)-beta-D-Gal-(1-&gt;4)-[alpha-L-Fuc-(1-&gt;3)]-beta-D-GlcNAc-(1-&gt;3)-beta-D-Gal-(1-&gt;4)-[alpha-L-Fuc-(1-&gt;3)]-beta-D-GlcNAc derivative + GDP + H(+). It catalyses the reaction a neolactoside nLc6Cer + GDP-beta-L-fucose = beta-D-Gal-(1-&gt;4)-[alpha-L-Fuc-(1-&gt;3)]-beta-D-GlcNAc-(1-&gt;3)-beta-D-Gal-(1-&gt;4)-beta-D-GlcNAc-(1-&gt;3)-beta-D-Gal-(1-&gt;4)-beta-D-Glc-(1&lt;-&gt;1')-Cer + GDP + H(+). The enzyme catalyses a neolactoside nLc6Cer + GDP-beta-L-fucose = beta-D-galactosyl-(1-&gt;4)-N-acetyl-beta-D-glucosaminyl-(1-&gt;3)-beta-D-galactosyl-(1-&gt;4)-[alpha-L-fucosyl-(1-&gt;3)]-N-acetyl-beta-D-glucosaminyl-(1-&gt;3)-beta-D-galactosyl-(1-&gt;4)-beta-D-glucosyl-(1&lt;-&gt;1')-ceramide + GDP + H(+). The catalysed reaction is a neolactoside VI(3)-alpha-NeuNAc-nLc6Cer + GDP-beta-L-fucose = a neolactoside VI(3)-alpha-NeuAc,V(3)-alphaFuc-nLc6Cer + GDP + H(+). It carries out the reaction beta-D-galactosyl-(1-&gt;4)-N-acetyl-D-glucosamine + GDP-beta-L-fucose = beta-D-galactosyl-(1-&gt;4)-[alpha-L-fucosyl-(1-&gt;3)]-N-acetyl-D-glucosamine + GDP + H(+). It catalyses the reaction N-acetyl-alpha-neuraminosyl-(2-&gt;3)-beta-D-galactosyl-(1-&gt;4)-N-acetyl-beta-D-glucosamine + GDP-beta-L-fucose = N-acetyl-alpha-neuraminosyl-(2-&gt;3)-beta-D-galactosyl-(1-&gt;4)-[alpha-L-fucosyl-(1-&gt;3)]-N-acetyl-beta-D-glucosamine + GDP + H(+). The enzyme catalyses lactose + GDP-beta-L-fucose = beta-D-galactosyl-(1-&gt;4)-[alpha-L-fucosyl-(1-&gt;3)]-D-glucose + GDP + H(+). The catalysed reaction is alpha-L-Fuc-(1-&gt;2)-beta-D-Gal-(1-&gt;4)-D-Glc + GDP-beta-L-fucose = alpha-L-Fuc-(1-&gt;2)-beta-D-Gal-(1-&gt;4)-[alpha-L-Fuc-(1-&gt;3)]-D-Glc + GDP + H(+). It carries out the reaction a beta-D-galactosyl-(1-&gt;4)-N-acetyl-beta-D-6-sulfooxy-glucosaminyl derivative + GDP-beta-L-fucose = a beta-D-galactosyl-(1-&gt;4)-[alpha-L-fucosyl-(1-&gt;3)]-N-acetyl-beta-D-6-sulfooxy-glucosaminyl derivative + GDP + H(+). Its pathway is protein modification; protein glycosylation. Its function is as follows. Catalyzes the transfer of L-fucose, from a guanosine diphosphate-beta-L-fucose, to the N-acetyl glucosamine (GlcNAc) of a distal alpha2,3 sialylated lactosamine unit of a glycoprotein- or glycolipid-linked sialopolylactosamines chain or of a distal or internal lactosamine unit of a neutral glycoprotein- or glycolipid-linked polylactosamines chain through an alpha-1,3 glycosidic linkage and participates in surface expression of the sialyl Lewis X (sLe(x)), Lewis X (Le(x)) and non sialylated VIM2 determinants. Moreover transfers fucose to H-type 2 (Fucalpha1-2Galbeta1-4GlcNAc) chain acceptor substrates and participates in difucosylated sialyl Lewis x determinants. Also fucosylates a polylactosamine substrate having a 6 sulfate modification at the GlcNAc moiety and gives rise to sialyl and non-sialyl 6-sulfo lewis X. Does not have activity towards type 1 ((Galbeta1-3GlcNAc)) and H-type 1 chain (Fucalpha1-2Galbeta1-3GlcNAc) acceptors substrates. This Pan troglodytes (Chimpanzee) protein is 4-galactosyl-N-acetylglucosaminide 3-alpha-L-fucosyltransferase FUT6.